The following is a 274-amino-acid chain: Short-chain dehydrogenase/reductase bsc3 (274 aa).

The NADP(+) site is built by I14, Y170, K174, I203, and T205. Y170 acts as the Proton donor in catalysis. Catalysis depends on K174, which acts as the Lowers pKa of active site Tyr.

The protein belongs to the short-chain dehydrogenases/reductases (SDR) family.

It participates in mycotoxin biosynthesis. In terms of biological role, short-chain dehydrogenase/reductase; part of the gene cluster that mediates the biosynthesis of the diterpene glucoside brassicicene C. In the first step of the brassicicene C biosynthesis, the bifunctional diterpene synthase bsc8 that possesses both prenyl transferase and terpene cyclase activity, converts isopentenyl diphosphate and dimethylallyl diphosphate into geranylgeranyl diphosphate (GGDP) that is further converted into fusicocca-2,10(14)-diene, the first precursor for brassicicene C. Fusicocca-2,10(14)-diene is then substrate of cytochrome P450 monooxygenase bsc1 for hydroxylation at the C-8 position. Oxidation at C-16 position to aldehyde is then catalyzed by the cytochrome P450 monooyxygenase bsc7, yielding fusicocca-2,10(14)-diene-8-beta,16-diol. Follows the isomerization of the double bond and reduction of aldehyde to alcohol catalyzed by the short-chain dehydrogenase/reductase bsc3 to yield the diol compound fusicocca-1,10(14)-diene-8 beta,16-diol. The next step is the oxidation at the C-3 position of fusicocca-2,10(14)-diene-8-beta,16-diol catalyzed by the alpha-ketoglutarate dependent dioxygenase bsc9, to produce a triol compound. Methylation of the hydroxy group at position 16 is performed by the methyltransferase bsc6. 16-O-methylation is followed by oxidation at the C-13 position to ketone and an alkyl shift of the methyl group leads to brassicicene C. Although the probable acetyltransferase bsc4 is included in the gene cluster, no acetylation reactions are necessary for brassicicene C biosynthesis. However, the fact that brassicicene E, which is a structurally related compound having an acetoxy group at position 12, was previously isolated from another strain of A.brassicicola suggests that the ATCC 96836 strain might also produce a small amount of brassicicene E. The sequence is that of Short-chain dehydrogenase/reductase bsc3 from Alternaria brassicicola (Dark leaf spot agent).